The sequence spans 308 residues: Putative mitochondrial transporter UCP3 (308 aa).

At methionine 1–proline 10 the chain is on the mitochondrial intermembrane side. The chain crosses the membrane as a helical span at residues proline 11–phenylalanine 32. Solcar repeat units follow at residues proline 11–phenylalanine 102, serine 111–lysine 202, and aspartate 211–alanine 296. Residues proline 33–serine 73 lie on the Mitochondrial matrix side of the membrane. The helical transmembrane segment at proline 74 to tyrosine 96 threads the bilayer. Over aspartate 97 to arginine 116 the chain is Mitochondrial intermembrane. The chain crosses the membrane as a helical span at residues isoleucine 117–proline 133. Over threonine 134–tryptophan 179 the chain is Mitochondrial matrix. The chain crosses the membrane as a helical span at residues proline 180–tyrosine 196. At aspartate 197 to phenylalanine 213 the chain is on the mitochondrial intermembrane side. Residues proline 214 to proline 233 traverse the membrane as a helical segment. Over valine 234–alanine 267 the chain is Mitochondrial matrix. Residues phenylalanine 268–tyrosine 290 form a helical membrane-spanning segment. The interval serine 275–leucine 297 is purine nucleotide binding. Residues glutamate 291–phenylalanine 308 lie on the Mitochondrial intermembrane side of the membrane.

It belongs to the mitochondrial carrier (TC 2.A.29) family. Interacts with HAX1; the interaction is direct and calcium-dependent.

It is found in the mitochondrion inner membrane. Its function is as follows. Putative transmembrane transporter that plays a role in mitochondrial metabolism via an as yet unclear mechanism. Originally, this mitochondrial protein was thought to act as a proton transmembrane transporter from the mitochondrial intermembrane space into the matrix, causing proton leaks through the inner mitochondrial membrane, thereby uncoupling mitochondrial membrane potential generation from ATP synthesis. However, this function is controversial and uncoupling may not be the function, or at least not the main function, but rather a consequence of more conventional metabolite transporter activity. This is Putative mitochondrial transporter UCP3 from Rattus norvegicus (Rat).